A 108-amino-acid chain; its full sequence is Peptidyl-prolyl cis-trans isomerase FKBP1B (108 aa).

One can recognise a PPIase FKBP-type domain in the interval 20–108 (GQTCVVHYTG…IFGVELLNLE (89 aa)).

This sequence belongs to the FKBP-type PPIase family. FKBP1 subfamily. Identified in a complex composed of RYR2, FKBP1B, PKA catalytic subunit, PRKAR2A, AKAP6, and the protein phosphatases PP2A and PP1. Interacts directly with RYR2.

The protein localises to the cytoplasm. Its subcellular location is the sarcoplasmic reticulum. The enzyme catalyses [protein]-peptidylproline (omega=180) = [protein]-peptidylproline (omega=0). Its activity is regulated as follows. Inhibited by both FK506 and rapamycin. In terms of biological role, has the potential to contribute to the immunosuppressive and toxic effects of FK506 and rapamycin. PPIases accelerate the folding of proteins. It catalyzes the cis-trans isomerization of proline imidic peptide bonds in oligopeptides. The chain is Peptidyl-prolyl cis-trans isomerase FKBP1B (FKBP1B) from Oryctolagus cuniculus (Rabbit).